A 152-amino-acid chain; its full sequence is Globin-1 subunit beta (152 aa).

Residue Ser-2 is modified to N-acetylserine. The region spanning Val-12–Leu-152 is the Globin domain. Heme b-binding residues include His-72 and His-104.

It belongs to the globin family. As to quaternary structure, heterotetramer of two alpha chains and two beta chains.

In Anadara trapezia (Sydney cockle), this protein is Globin-1 subunit beta.